The sequence spans 272 residues: Cell division protein FtsQ (272 aa).

The Cytoplasmic portion of the chain corresponds to 1 to 20 (MSSYAPREIPLDIRLMQGTS). Residues 21-40 (RALFWLVALGCLFVAGHWLM) traverse the membrane as a helical segment. At 41–272 (QRNWWDIRAV…KTPQPAGRKD (232 aa)) the chain is on the periplasmic side. The POTRA domain occupies 45–114 (WDIRAVRLQG…MQLAVTLQAQ (70 aa)).

This sequence belongs to the FtsQ/DivIB family. FtsQ subfamily. In terms of assembly, part of a complex composed of FtsB, FtsL and FtsQ.

It localises to the cell inner membrane. Functionally, essential cell division protein. May link together the upstream cell division proteins, which are predominantly cytoplasmic, with the downstream cell division proteins, which are predominantly periplasmic. May control correct divisome assembly. This Thiomonas arsenitoxydans (strain DSM 22701 / CIP 110005 / 3As) protein is Cell division protein FtsQ.